Reading from the N-terminus, the 244-residue chain is Uridylate kinase (244 aa).

Residue 15 to 18 coordinates ATP; that stretch reads KLSG. Positions 23–28 are involved in allosteric activation by GTP; the sequence is GSEGFG. Glycine 57 contacts UMP. Positions 58 and 62 each coordinate ATP. Residues aspartate 77 and 138–145 contribute to the UMP site; that span reads TGNPFFTT. Positions 165, 171, and 174 each coordinate ATP.

Belongs to the UMP kinase family. In terms of assembly, homohexamer.

It localises to the cytoplasm. The enzyme catalyses UMP + ATP = UDP + ADP. It participates in pyrimidine metabolism; CTP biosynthesis via de novo pathway; UDP from UMP (UMPK route): step 1/1. Allosterically activated by GTP. Inhibited by UTP. Catalyzes the reversible phosphorylation of UMP to UDP. The sequence is that of Uridylate kinase from Aeromonas hydrophila subsp. hydrophila (strain ATCC 7966 / DSM 30187 / BCRC 13018 / CCUG 14551 / JCM 1027 / KCTC 2358 / NCIMB 9240 / NCTC 8049).